The chain runs to 606 residues: Melanoma-associated antigen D2 (606 aa).

A disordered region spans residues 1–204; it reads MSDTSESGAG…QASGTTGGRR (204 aa). Ser2 bears the N-acetylserine mark. Ser5 carries the post-translational modification Phosphoserine. Positions 24 to 37 are enriched in polar residues; the sequence is SSMMQTLLTVTQNV. Phosphothreonine is present on Thr72. Residues 81–93 show a composition bias toward polar residues; that stretch reads TQASSTTQLTDTQ. Over residues 122–131 the composition is skewed to basic and acidic residues; the sequence is ETKKVSHVAD. A compositionally biased stretch (low complexity) spans 142–164; the sequence is EAAPSQAPADEPEPESAAAQSQE. Phosphoserine is present on Ser157. Over residues 171-181 the composition is skewed to basic residues; the sequence is KVKAKKARKVK. A phosphoserine mark is found at Ser190, Ser191, Ser194, Ser197, Ser244, and Ser247. The span at 248–260 shows a compositional bias: basic residues; it reads PKARRGKARRRAA. The segment at 248–275 is disordered; it reads PKARRGKARRRAAKLQSSQEPEAPPPRD. Phosphoserine occurs at positions 264 and 265. An MAGE domain is found at 279–478; sequence LQGRANDLVK…KEWAAQYREA (200 aa). Positions 534–563 are disordered; sequence GAEAKAKAQESGSASTGASTSTNNSASASA.

As to quaternary structure, interacts with GNAS. May interact with DNAJB1. As to expression, widely expressed. In the developing and adult kidney, expressed in the thick ascending limb of the loop of Henle and the distal convoluted tubules outside the loop.

Functionally, regulates the expression, localization to the plasma membrane and function of the sodium chloride cotransporters SLC12A1 and SLC12A3, two key components of salt reabsorption in the distal renal tubule. The polypeptide is Melanoma-associated antigen D2 (MAGED2) (Homo sapiens (Human)).